Reading from the N-terminus, the 255-residue chain is MEQALTGEAQSRWPRRGGSGAMAEAPGPSGESRGHSATQLPAEKTVGGPSRGCSSSVLRVSQLVLQAISTHKGLTLAALKKELRNAGYEVRRKSGRHEAPRGQAKATLLRVSGSDAAGYFRVWKVPKPRRKPGRARQEEGTRAPWRTPAAPRSSRRRRQPLRKAARKAREVWRRNARAKAKANARARRTRRARPRAKEPPCARAKEEAGATAADEGRGQAVKEDTTPRSGKDKRRSSKPREEKQEPKKPAQRTIQ.

A disordered region spans residues 1-54 (MEQALTGEAQSRWPRRGGSGAMAEAPGPSGESRGHSATQLPAEKTVGGPSRGCS). Serine 56 carries the phosphoserine modification. Positions 124–134 (KVPKPRRKPGR) are enriched in basic residues. The tract at residues 124-255 (KVPKPRRKPG…PKKPAQRTIQ (132 aa)) is disordered. The span at 142 to 152 (RAPWRTPAAPR) shows a compositional bias: low complexity. 2 stretches are compositionally biased toward basic residues: residues 153–166 (SSRRRRQPLRKAAR) and 174–194 (RNARAKAKANARARRTRRARP). 2 stretches are compositionally biased toward basic and acidic residues: residues 195 to 230 (RAKEPPCARAKEEAGATAADEGRGQAVKEDTTPRSG) and 238 to 248 (KPREEKQEPKK).

It belongs to the histone H1/H5 family. In terms of tissue distribution, testis-specific.

Its subcellular location is the nucleus. The protein resides in the chromosome. Functionally, essential for normal spermatogenesis and male fertility. Required for proper cell restructuring and DNA condensation during the elongation phase of spermiogenesis. Involved in the histone-protamine transition of sperm chromatin and the subsequent production of functional sperm. Binds both double-stranded and single-stranded DNA, ATP and protamine-1. This is Testis-specific H1 histone from Homo sapiens (Human).